Here is an 87-residue protein sequence, read N- to C-terminus: Small ribosomal subunit protein bS18 (87 aa).

A compositionally biased stretch (basic and acidic residues) spans Met-1–Lys-20. The tract at residues Met-1–Pro-24 is disordered.

The protein belongs to the bacterial ribosomal protein bS18 family. In terms of assembly, part of the 30S ribosomal subunit. Forms a tight heterodimer with protein bS6.

Binds as a heterodimer with protein bS6 to the central domain of the 16S rRNA, where it helps stabilize the platform of the 30S subunit. The protein is Small ribosomal subunit protein bS18 of Leifsonia xyli subsp. xyli (strain CTCB07).